The primary structure comprises 376 residues: MSDEEQSAIVCDNGSGMVKAGFSGDDALCHVFPSIVGRPKNEQAMMGSASKKLFVGDEAQAKRGVLSLKYPIEHGIVTNWDDMEKIWHHTFYNDVRVNPESHSVLLTEAPMNPKQNREKMTQIMFETFGVPAMYVGIQAVLSLYSSGRTTGIVLDAGDGVTHTVPIYEGYSLPHAIRRMDMAGRDLTEYLMKLLMESGMTFTTSAEKEIVRNVKEQLCYVALDFDEEVTNSAKTVNEEPFELPDGTIMQVGNQRFRCPEALFKPMLIGLDEAPGFHEMTFQSINKCDIDVRRDLYGNIVLSGGTTMFKNLPERLGKEISNLAPSSIKPKVVAPPERKYSVWIGGSILSSLTTFQTMWIKKSEYDEAGPSIVHNKCF.

This sequence belongs to the actin family.

The protein resides in the cytoplasm. The protein localises to the cytoskeleton. It carries out the reaction ATP + H2O = ADP + phosphate + H(+). Its function is as follows. Actins are highly conserved proteins that are involved in various types of cell motility and are ubiquitously expressed in all eukaryotic cells. This is Actin from Trypanosoma cruzi.